A 306-amino-acid polypeptide reads, in one-letter code: Dirigent protein 24 (306 aa).

Residues 1-21 (MAKALSLTIFLFLLIASNVQS) form the signal peptide. A disordered region spans residues 36–61 (PQVPEEEDDSPQAVTTTPTPIPLPGP).

Belongs to the plant dirigent protein family. Homodimer.

Its subcellular location is the secreted. It is found in the extracellular space. The protein resides in the apoplast. Its function is as follows. Dirigent proteins impart stereoselectivity on the phenoxy radical-coupling reaction, yielding optically active lignans from two molecules of coniferyl alcohol in the biosynthesis of lignans, flavonolignans, and alkaloids and thus plays a central role in plant secondary metabolism. The chain is Dirigent protein 24 (DIR24) from Arabidopsis thaliana (Mouse-ear cress).